We begin with the raw amino-acid sequence, 380 residues long: Protein COS12 (380 aa).

The Cytoplasmic segment spans residues 1–70 (MDGAKFENTV…WKIRGKRHYL (70 aa)). The helical transmembrane segment at 71–91 (VIVTALMFEVLYFLWTYSYIF) threads the bilayer. The Extracellular segment spans residues 92 to 231 (RERTLGKQVS…KLLWAFKEVT (140 aa)). The chain crosses the membrane as a helical span at residues 232 to 252 (IMNSRFAFFSIAYLNGLLTIP). The Cytoplasmic segment spans residues 253-257 (RLRNS). The chain crosses the membrane as a helical span at residues 258–278 (LHILYVCAVLSSMIIEYLIGI). Residues 279–380 (DKFRFKSMNL…KEAQSACNDV (102 aa)) are Extracellular-facing.

Belongs to the DUP/COS family.

It is found in the membrane. The polypeptide is Protein COS12 (COS12) (Saccharomyces cerevisiae (strain ATCC 204508 / S288c) (Baker's yeast)).